Consider the following 665-residue polypeptide: Alpha-1,4-glucan:maltose-1-phosphate maltosyltransferase (665 aa).

Alpha-maltose 1-phosphate-binding residues include Lys-255, Gln-315, and Asp-350. Asp-386 (nucleophile) is an active-site residue. Asn-387 is an alpha-maltose 1-phosphate binding site. The active-site Proton donor is the Glu-415. 526–527 (KY) lines the alpha-maltose 1-phosphate pocket.

The protein belongs to the glycosyl hydrolase 13 family. GlgE subfamily. Homodimer.

The catalysed reaction is alpha-maltose 1-phosphate + [(1-&gt;4)-alpha-D-glucosyl](n) = [(1-&gt;4)-alpha-D-glucosyl](n+2) + phosphate. In terms of biological role, maltosyltransferase that uses maltose 1-phosphate (M1P) as the sugar donor to elongate linear or branched alpha-(1-&gt;4)-glucans. Is involved in a branched alpha-glucan biosynthetic pathway from trehalose, together with TreS, Mak and GlgB. This is Alpha-1,4-glucan:maltose-1-phosphate maltosyltransferase from Myxococcus xanthus (strain DK1622).